Here is a 507-residue protein sequence, read N- to C-terminus: Rho GTPase-activating protein 19 (507 aa).

In terms of domain architecture, Rho-GAP spans 112–305 (APLTEEGIAQ…FMIKHSQKLF (194 aa)). Disordered regions lie at residues 344 to 371 (FLKH…QQHT), 400 to 419 (KNTP…KKHV), and 483 to 507 (DLQI…ETSI). Low complexity predominate over residues 355-369 (SSPSSSTSLQEQTQQ). The segment covering 400 to 413 (KNTPRTPVSDTQVP) has biased composition (polar residues). The span at 483 to 492 (DLQIRKEASS) shows a compositional bias: basic and acidic residues.

GTPase activator for the Rho-type GTPases by converting them to an inactive GDP-bound state. The polypeptide is Rho GTPase-activating protein 19 (arhgap19) (Xenopus laevis (African clawed frog)).